The primary structure comprises 585 residues: Cysteine/serine-rich nuclear protein 3 (585 aa).

Disordered stretches follow at residues 1–52 (MSGI…TPSS) and 335–395 (ELDC…GFVE). Low complexity predominate over residues 30 to 40 (SSESADSGDSV). A compositionally biased stretch (polar residues) spans 41 to 52 (NPSTSSHFTPSS). The segment covering 335–349 (ELDCQGEEEEEEEDG) has biased composition (acidic residues). Positions 351-366 (SFCSGVTDSSTQSLAP) are enriched in polar residues. Over residues 368–389 (ESDEEEEEEEEEEEEEDDDDDK) the composition is skewed to acidic residues.

It belongs to the AXUD1 family.

The protein resides in the nucleus. In terms of biological role, binds to the consensus sequence 5'-AGAGTG-3' and has transcriptional activator activity. Plays a role in apoptosis. In Homo sapiens (Human), this protein is Cysteine/serine-rich nuclear protein 3 (CSRNP3).